Here is a 166-residue protein sequence, read N- to C-terminus: NAD(P)H-quinone oxidoreductase subunit I, chloroplastic (166 aa).

4Fe-4S ferredoxin-type domains are found at residues 55 to 84 (GRIH…VDWK) and 95 to 124 (LNYS…MTEE). Residues Cys-64, Cys-67, Cys-70, Cys-74, Cys-104, Cys-107, Cys-110, and Cys-114 each contribute to the [4Fe-4S] cluster site.

Belongs to the complex I 23 kDa subunit family. In terms of assembly, NDH is composed of at least 16 different subunits, 5 of which are encoded in the nucleus. The cofactor is [4Fe-4S] cluster.

Its subcellular location is the plastid. It localises to the chloroplast thylakoid membrane. The catalysed reaction is a plastoquinone + NADH + (n+1) H(+)(in) = a plastoquinol + NAD(+) + n H(+)(out). It carries out the reaction a plastoquinone + NADPH + (n+1) H(+)(in) = a plastoquinol + NADP(+) + n H(+)(out). Its function is as follows. NDH shuttles electrons from NAD(P)H:plastoquinone, via FMN and iron-sulfur (Fe-S) centers, to quinones in the photosynthetic chain and possibly in a chloroplast respiratory chain. The immediate electron acceptor for the enzyme in this species is believed to be plastoquinone. Couples the redox reaction to proton translocation, and thus conserves the redox energy in a proton gradient. In Hofmeisteria fasciculata (Helogyne fasciculata), this protein is NAD(P)H-quinone oxidoreductase subunit I, chloroplastic.